Here is a 123-residue protein sequence, read N- to C-terminus: Snaclec GPIB-binding protein subunit beta (123 aa).

Intrachain disulfides connect Cys-2–Cys-13, Cys-30–Cys-119, and Cys-96–Cys-111. The 112-residue stretch at 9–120 (YGGHCYKLFK…CTRLQYFVCE (112 aa)) folds into the C-type lectin domain.

This sequence belongs to the snaclec family. Heterodimer of subunits alpha and beta; disulfide-linked. In terms of tissue distribution, expressed by the venom gland.

It is found in the secreted. In terms of biological role, binds to platelet GPIb (subunit alpha) (GP1BA) and functions as a receptor blocker for vWF binding to GPIb. The platelet GPIb-binding site resides on the GPIB-BP subunit beta and not on the alpha subunit. At a final concentration of 104 nM totally abolishes vWF-dependent shear-induced platelet aggregation (SIPA) at a high shear stress, but had no effect on SIPA at a low shear stress. The polypeptide is Snaclec GPIB-binding protein subunit beta (Bothrops jararaca (Jararaca)).